A 1074-amino-acid chain; its full sequence is Probable phospholipid-transporting ATPase tat-5 (1074 aa).

Residues 1–26 (MGKRKKNDESSSSSSQKPCVSSSSDD) form a disordered region. The segment covering 10-26 (SSSSSSQKPCVSSSSDD) has biased composition (low complexity). 4 consecutive transmembrane segments (helical) span residues 118 to 138 (FVPI…FLLM), 143 to 163 (FIPA…GFVL), 354 to 374 (LTKL…AMKG), and 378 to 398 (LWYR…PISL). The active-site 4-aspartylphosphate intermediate is the D442. Residues D442, K443, T444, E524, F570, K575, K594, R623, T624, T704, G705, D706, R786, and K792 each contribute to the ATP site. Position 442 (D442) interacts with Mg(2+). T444 is a binding site for Mg(2+). Residue D813 participates in Mg(2+) binding. Residues N816 and D817 each contribute to the ATP site. Mg(2+) is bound at residue D817. 5 helical membrane-spanning segments follow: residues 886–906 (AIFS…VLMV), 954–974 (IWVL…LLVF), 978–998 (FIHV…IMVA), 1006–1026 (WAML…LILF), and 1038–1058 (WVFI…LYIV).

This sequence belongs to the cation transport ATPase (P-type) (TC 3.A.3) family. Type IV subfamily. Mg(2+) is required as a cofactor.

It is found in the cell membrane. It catalyses the reaction ATP + H2O + phospholipidSide 1 = ADP + phosphate + phospholipidSide 2.. Its function is as follows. Plays a role in regulating membrane trafficking of cargo proteins during embryogenesis. Regulates snx-3 retromer-mediated endosomal sorting of mig-14, a transporter of Wnt egl-20 morphogen. Together with mon-2 and pad-1, may participate in the formation of endosomal carriers that direct mig-14 trafficking back to Golgi, away from lysosomal degradation. Required for Wnt egl-20 gradient formation along the anteroposterior body axis and migration of QL neuroblast descendants toward the posterior part. Maintains phosphatidylethanolamine (PE) asymmetry at the cell membrane and prevents the budding of ectosome vesicles that affect intercellular communication and morphogenesis. This is Probable phospholipid-transporting ATPase tat-5 (tat-5) from Caenorhabditis elegans.